We begin with the raw amino-acid sequence, 145 residues long: Beta sliding clamp (145 aa).

Belongs to the beta sliding clamp family. As to quaternary structure, forms a ring-shaped head-to-tail homodimer around DNA which binds and tethers DNA polymerases and other proteins to the DNA. The DNA replisome complex has a single clamp-loading complex (3 tau and 1 each of delta, delta', psi and chi subunits) which binds 3 Pol III cores (1 core on the leading strand and 2 on the lagging strand) each with a beta sliding clamp dimer. Additional proteins in the replisome are other copies of gamma, psi and chi, Ssb, DNA helicase and RNA primase.

It is found in the cytoplasm. In terms of biological role, confers DNA tethering and processivity to DNA polymerases and other proteins. Acts as a clamp, forming a ring around DNA (a reaction catalyzed by the clamp-loading complex) which diffuses in an ATP-independent manner freely and bidirectionally along dsDNA. Initially characterized for its ability to contact the catalytic subunit of DNA polymerase III (Pol III), a complex, multichain enzyme responsible for most of the replicative synthesis in bacteria; Pol III exhibits 3'-5' exonuclease proofreading activity. The beta chain is required for initiation of replication as well as for processivity of DNA replication. This chain is Beta sliding clamp (dnaN), found in Vibrio harveyi (Beneckea harveyi).